We begin with the raw amino-acid sequence, 273 residues long: L-cysteine S-thiosulfotransferase subunit SoxA (273 aa).

Residues 1–24 (MKKTVTAVALLCALSSTAIAPTFA) form the signal peptide. An intrachain disulfide couples Cys74 to Cys110. The 112-residue stretch at 162–273 (EMYELGKRMF…GVMLTPGIKR (112 aa)) folds into the Cytochrome c domain. The heme site is built by Cys182 and His186. Arg230 contributes to the substrate binding site. Cys234 lines the heme pocket. Catalysis depends on Cys234, which acts as the Cysteine persulfide intermediate.

Belongs to the SoxA family. As to quaternary structure, heterodimer of SoxA and SoxX. Heme is required as a cofactor. Cysteine persulfide at Cys-234.

The protein resides in the periplasm. The enzyme catalyses L-cysteinyl-[SoxY protein] + thiosulfate + 2 Fe(III)-[cytochrome c] = S-sulfosulfanyl-L-cysteinyl-[SoxY protein] + 2 Fe(II)-[cytochrome c] + 2 H(+). It carries out the reaction S-sulfanyl-L-cysteinyl-[SoxY protein] + thiosulfate + 2 Fe(III)-[cytochrome c] = S-(2-sulfodisulfanyl)-L-cysteinyl-[SoxY protein] + 2 Fe(II)-[cytochrome c] + 2 H(+). C-type monoheme cytochrome, which is part of the SoxAX cytochrome complex involved in sulfur oxidation. The SoxAX complex catalyzes the formation of a heterodisulfide bond between the conserved cysteine residue on a sulfur carrier SoxYZ complex subunit SoxY and thiosulfate or other inorganic sulfur substrates. This leads to the liberation of two electrons, which may be transferred from the SoxAX complex to another cytochrome c that then channels them into the respiratory electron transport chain. Some electrons may be used for reductive CO(2) fixation. The protein is L-cysteine S-thiosulfotransferase subunit SoxA of Hydrogenophilus thermoluteolus (Pseudomonas hydrogenothermophila).